The following is a 581-amino-acid chain: Tail sheath protein (581 aa).

It belongs to the myoviridae tail sheath protein family. Homomultimer.

It is found in the virion. Its subcellular location is the host cytoplasm. In terms of biological role, polymerizes as an extended structure around the baseplate-tail tube complex. During ejection, the sheath shifts to a contracted form, thereby making the inner tail tube protrude through the host cell envelope. The protein is Tail sheath protein of Mycobacterium phage Bxz1 (Mycobacteriophage Bxz1).